We begin with the raw amino-acid sequence, 300 residues long: DNA repair protein RecO (300 aa).

This sequence belongs to the RecO family.

In terms of biological role, involved in DNA repair and RecF pathway recombination. The chain is DNA repair protein RecO from Nostoc punctiforme (strain ATCC 29133 / PCC 73102).